The chain runs to 449 residues: 1H-pyrrole-2-carbonyl-[peptidyl-carrier protein] chlorinase (449 aa).

Alanine 16, glutamate 35, arginine 41, histidine 43, valine 44, serine 47, arginine 123, isoleucine 147, and aspartate 316 together coordinate FAD. Chloride is bound by residues serine 327 and glycine 328. Valine 329 lines the FAD pocket.

It belongs to the flavin-dependent halogenase family. As to quaternary structure, homodimer.

It carries out the reaction (1H-pyrrole-2-carbonyl)-[peptidyl-carrier protein] + 2 FADH2 + 2 chloride + 2 O2 = (4,5-dichloro-1H-pyrrole-2-carbonyl)-[peptidyl-carrier protein] + 2 FAD + 4 H2O. The enzyme catalyses (1H-pyrrole-2-carbonyl)-[peptidyl-carrier protein] + FADH2 + chloride + O2 = (5-chloro-1H-pyrrole-2-carbonyl)-[peptidyl-carrier protein] + FAD + 2 H2O. It catalyses the reaction (5-chloro-1H-pyrrole-2-carbonyl)-[peptidyl-carrier protein] + FADH2 + chloride + O2 = (4,5-dichloro-1H-pyrrole-2-carbonyl)-[peptidyl-carrier protein] + FAD + 2 H2O. Its pathway is antibiotic biosynthesis. Involved in the biosynthesis of the antibiotic pyoluteorin. Catalyzes the dichlorination of the pyrrole ring of pyrrolyl-S-PltL, generating the 5-chloropyrrolyl-S-PltL intermediate and then the 4,5-dichloropyrrolyl-S-PltL product. This chain is 1H-pyrrole-2-carbonyl-[peptidyl-carrier protein] chlorinase, found in Pseudomonas fluorescens (strain ATCC BAA-477 / NRRL B-23932 / Pf-5).